The chain runs to 294 residues: N-acetylmuramic acid 6-phosphate etherase (294 aa).

Positions 54–217 (VISSFQNGGR…STASMIGIGK (164 aa)) constitute an SIS domain. Glu82 acts as the Proton donor in catalysis. Glu113 is an active-site residue.

It belongs to the GCKR-like family. MurNAc-6-P etherase subfamily. In terms of assembly, homodimer.

It carries out the reaction N-acetyl-D-muramate 6-phosphate + H2O = N-acetyl-D-glucosamine 6-phosphate + (R)-lactate. It functions in the pathway amino-sugar metabolism; N-acetylmuramate degradation. Its function is as follows. Specifically catalyzes the cleavage of the D-lactyl ether substituent of MurNAc 6-phosphate, producing GlcNAc 6-phosphate and D-lactate. This Bacillus cytotoxicus (strain DSM 22905 / CIP 110041 / 391-98 / NVH 391-98) protein is N-acetylmuramic acid 6-phosphate etherase.